Consider the following 165-residue polypeptide: Crossover junction endodeoxyribonuclease RuvC (165 aa).

Catalysis depends on residues Asp-7, Glu-68, and His-142. Mg(2+) is bound by residues Asp-7, Glu-68, and His-142.

This sequence belongs to the RuvC family. In terms of assembly, homodimer which binds Holliday junction (HJ) DNA. The HJ becomes 2-fold symmetrical on binding to RuvC with unstacked arms; it has a different conformation from HJ DNA in complex with RuvA. In the full resolvosome a probable DNA-RuvA(4)-RuvB(12)-RuvC(2) complex forms which resolves the HJ. Mg(2+) serves as cofactor.

It is found in the cytoplasm. It carries out the reaction Endonucleolytic cleavage at a junction such as a reciprocal single-stranded crossover between two homologous DNA duplexes (Holliday junction).. Functionally, the RuvA-RuvB-RuvC complex processes Holliday junction (HJ) DNA during genetic recombination and DNA repair. Endonuclease that resolves HJ intermediates. Cleaves cruciform DNA by making single-stranded nicks across the HJ at symmetrical positions within the homologous arms, yielding a 5'-phosphate and a 3'-hydroxyl group; requires a central core of homology in the junction. The consensus cleavage sequence is 5'-(A/T)TT(C/G)-3'. Cleavage occurs on the 3'-side of the TT dinucleotide at the point of strand exchange. HJ branch migration catalyzed by RuvA-RuvB allows RuvC to scan DNA until it finds its consensus sequence, where it cleaves and resolves the cruciform DNA. This chain is Crossover junction endodeoxyribonuclease RuvC, found in Anaplasma marginale (strain St. Maries).